A 129-amino-acid polypeptide reads, in one-letter code: uncharacterized protein (129 aa).

The N-terminal stretch at Met1–Ala27 is a signal peptide. Residue Cys28 is the site of N-palmitoyl cysteine attachment. The S-diacylglycerol cysteine moiety is linked to residue Cys28.

It belongs to the MG439/MG440 family.

Its subcellular location is the cell membrane. This is an uncharacterized protein from Mycoplasma pneumoniae (strain ATCC 29342 / M129 / Subtype 1) (Mycoplasmoides pneumoniae).